A 725-amino-acid polypeptide reads, in one-letter code: Ribosomal RNA large subunit methyltransferase K/L (725 aa).

The region spanning 45–156 (SGYRACLWSR…RGRLSLGIDL (112 aa)) is the THUMP domain.

The protein belongs to the methyltransferase superfamily. RlmKL family.

It localises to the cytoplasm. The enzyme catalyses guanosine(2445) in 23S rRNA + S-adenosyl-L-methionine = N(2)-methylguanosine(2445) in 23S rRNA + S-adenosyl-L-homocysteine + H(+). It carries out the reaction guanosine(2069) in 23S rRNA + S-adenosyl-L-methionine = N(2)-methylguanosine(2069) in 23S rRNA + S-adenosyl-L-homocysteine + H(+). In terms of biological role, specifically methylates the guanine in position 2445 (m2G2445) and the guanine in position 2069 (m7G2069) of 23S rRNA. This is Ribosomal RNA large subunit methyltransferase K/L from Marinobacter nauticus (strain ATCC 700491 / DSM 11845 / VT8) (Marinobacter aquaeolei).